Consider the following 151-residue polypeptide: Putative pre-16S rRNA nuclease (151 aa).

The protein belongs to the YqgF nuclease family.

The protein localises to the cytoplasm. In terms of biological role, could be a nuclease involved in processing of the 5'-end of pre-16S rRNA. The sequence is that of Putative pre-16S rRNA nuclease from Pelagibacter ubique (strain HTCC1062).